A 246-amino-acid polypeptide reads, in one-letter code: tRNA (guanine-N(1)-)-methyltransferase (246 aa).

Residues glycine 113 and 133–138 (IGDYVL) contribute to the S-adenosyl-L-methionine site.

It belongs to the RNA methyltransferase TrmD family. In terms of assembly, homodimer.

It is found in the cytoplasm. It carries out the reaction guanosine(37) in tRNA + S-adenosyl-L-methionine = N(1)-methylguanosine(37) in tRNA + S-adenosyl-L-homocysteine + H(+). Its function is as follows. Specifically methylates guanosine-37 in various tRNAs. This chain is tRNA (guanine-N(1)-)-methyltransferase, found in Haemophilus influenzae (strain 86-028NP).